A 138-amino-acid chain; its full sequence is Cysteine desulfuration protein SufE (138 aa).

The Cysteine persulfide intermediate role is filled by cysteine 51.

This sequence belongs to the SufE family. Homodimer. Interacts with SufS.

The protein resides in the cytoplasm. The protein operates within cofactor biosynthesis; iron-sulfur cluster biosynthesis. In terms of biological role, participates in cysteine desulfuration mediated by SufS. Cysteine desulfuration mobilizes sulfur from L-cysteine to yield L-alanine and constitutes an essential step in sulfur metabolism for biosynthesis of a variety of sulfur-containing biomolecules. Functions as a sulfur acceptor for SufS, by mediating the direct transfer of the sulfur atom from the S-sulfanylcysteine of SufS, an intermediate product of cysteine desulfuration process. In Klebsiella pneumoniae subsp. pneumoniae (strain ATCC 700721 / MGH 78578), this protein is Cysteine desulfuration protein SufE.